We begin with the raw amino-acid sequence, 1221 residues long: Fibulin-2 (1221 aa).

A signal peptide spans 1–26 (MLLQESAGVWLALALVTALTPSPSMA). The interval 27-176 (VPWQDCTGAE…ELICYQLPGC (150 aa)) is subdomain NA (Cys-rich). Residues 27–434 (VPWQDCTGAE…DGSTKDLIET (408 aa)) are n. Residues 177–434 (HGNFSDAEEG…DGSTKDLIET (258 aa)) are subdomain NB (Cys-free). N-linked (GlcNAc...) asparagine glycosylation is present at N179. 2 disordered regions span residues 248-329 (PTAA…LIPD) and 341-399 (GAAP…PQHP). The segment covering 270-283 (DTEEDEEEEEEETL) has biased composition (acidic residues). Residues 312 to 322 (QEKEAEAKAGP) are compositionally biased toward basic and acidic residues. A Cell attachment site motif is present at residues 421 to 423 (RGD). Disulfide bonds link C435–C462, C436–C469, C449–C470, C479–C508, C492–C509, C511–C535, C512–C542, C525–C543, C598–C610, C606–C619, and C621–C634. Anaphylatoxin-like domains follow at residues 435-477 (CCAA…LKEK), 478-510 (SCVAGVMGAKEGETCGAEDNDTCGVSLYKQCCD), and 511-543 (CCGLGLRVRAEGQSCESNPNLGYPCNHVMLSCC). N-linked (GlcNAc...) asparagine glycosylation is present at N497. Residues 594–635 (DQDECLMLPGELCQHLCINTVGSYRCACFPGFELQGDGRTCR) form the EGF-like 1; calcium-binding domain. The interval 633 to 661 (TCRPDRGAPQLDTARESAPRSESAQVSPN) is disordered. Over residues 652–661 (RSESAQVSPN) the composition is skewed to polar residues. An EGF-like 2 domain is found at 669–708 (QPNTCKDNGPCRQVCRVVGDTAMCSCFPGYAIMADGVSCE). 5 cysteine pairs are disulfide-bonded: C673–C683, C679–C692, C694–C707, C713–C726, and C720–C735. An EGF-like 3; calcium-binding domain is found at 709–755 (DQDECLMGTHDCSWKQFCVNTLGSFYCVNHTVLCAEGYILNAHRKCV). N737 carries N-linked (GlcNAc...) asparagine glycosylation. A disulfide bond links C742 and C754. One can recognise an EGF-like 4; calcium-binding domain in the interval 756-800 (DINECVTDLHTCTRAEHCVNTPGSFQCYKALTCEPGYVLTDGECT). Positions 801-846 (DVDECVTGTHNCQAGFSCQNTKGSFYCQARQRCMDGFLQDPEGNCV) constitute an EGF-like 5; calcium-binding domain. Intrachain disulfides connect C805-C818, C812-C827, and C833-C845. Residues 847 to 894 (DINECTSLLEPCRSGFSCINTVGSYTCQRNPLVCGRGYHANEEGSECV) enclose the EGF-like 6; calcium-binding domain. Positions 895–937 (DVNECETGVHRCGEGQLCYNLPGSYRCDCKPGFQRDAFGRTCI) constitute an EGF-like 7; calcium-binding domain. Cystine bridges form between C899-C912, C906-C921, C923-C936, C942-C954, C950-C963, C965-C978, C984-C993, C989-C1002, C1004-C1017, C1023-C1035, C1031-C1044, C1046-C1060, C1066-C1079, C1073-C1088, and C1093-C1105. An EGF-like 8; calcium-binding domain is found at 938 to 979 (DVNECWVSPGRLCQHTCENTPGSYRCSCAAGFLLAADGKHCE). Residues 980–1018 (DVNECETRRCSQECANIYGSYQCYCRQGYQLAEDGHTCT) enclose the EGF-like 9; calcium-binding domain. The EGF-like 10; calcium-binding domain occupies 1019-1061 (DIDECAQGAGILCTFRCVNVPGSYQCACPEQGYTMMANGRSCK). The EGF-like 11; calcium-binding domain occupies 1062-1106 (DLDECALGTHNCSEAETCHNIQGSFRCLRFDCPPNYVRVSETKCE). N-linked (GlcNAc...) asparagine glycosylation occurs at N1072. Residues 1111–1221 (QDITECQTSP…MYIFFTTFAP (111 aa)) form a domain III region.

It belongs to the fibulin family. In terms of assembly, homotrimer; disulfide-linked. Interacts with LAMA2. Interacts with FBN1 (via N-terminal domain). Forms a ternary complex with ELN and FBN1. As to expression, component of both basement membranes and other connective tissues.

It is found in the secreted. The protein localises to the extracellular space. The protein resides in the extracellular matrix. Its function is as follows. Its binding to fibronectin and some other ligands is calcium dependent. May act as an adapter that mediates the interaction between FBN1 and ELN. The protein is Fibulin-2 (Fbln2) of Mus musculus (Mouse).